Here is a 199-residue protein sequence, read N- to C-terminus: Recombination protein RecR (199 aa).

The C4-type zinc finger occupies 58–73 (CSVCYGLADSDPCHIC). In terms of domain architecture, Toprim spans 81–176 (DVVCVVEQGT…KITRIASGVP (96 aa)).

It belongs to the RecR family.

Functionally, may play a role in DNA repair. It seems to be involved in an RecBC-independent recombinational process of DNA repair. It may act with RecF and RecO. The protein is Recombination protein RecR of Desulfatibacillum aliphaticivorans.